The following is a 174-amino-acid chain: Gamma-crystallin E (174 aa).

Beta/gamma crystallin 'Greek key' domains are found at residues 2-40 (GKIT…RVDS) and 41-83 (GCWM…RLIP). Residues 84-87 (HSSS) are connecting peptide. Beta/gamma crystallin 'Greek key' domains are found at residues 88–128 (HRIR…HVME) and 129–171 (GYWV…RRIM).

It belongs to the beta/gamma-crystallin family. In terms of tissue distribution, detected in the superior olivary complex and fibers of the ventral aoustic stria of the auditory hindbrain.

In terms of biological role, crystallins are the dominant structural components of the vertebrate eye lens. This Rattus norvegicus (Rat) protein is Gamma-crystallin E (Cryge).